Here is a 368-residue protein sequence, read N- to C-terminus: S-adenosylmethionine decarboxylase proenzyme (368 aa).

Catalysis depends on residues Glu26 and Glu29. The Schiff-base intermediate with substrate; via pyruvic acid role is filled by Ser83. Ser83 is subject to Pyruvic acid (Ser); by autocatalysis. Cys97 serves as the catalytic Proton donor; for catalytic activity. Residues Ser246 and His261 each act as proton acceptor; for processing activity in the active site.

Belongs to the eukaryotic AdoMetDC family. In terms of assembly, heterotetramer of two alpha and two beta chains. The cofactor is pyruvate. In terms of processing, is synthesized initially as an inactive proenzyme. Formation of the active enzyme involves a self-maturation process in which the active site pyruvoyl group is generated from an internal serine residue via an autocatalytic post-translational modification. Two non-identical subunits are generated from the proenzyme in this reaction, and the pyruvate is formed at the N-terminus of the alpha chain, which is derived from the carboxyl end of the proenzyme. The post-translation cleavage follows an unusual pathway, termed non-hydrolytic serinolysis, in which the side chain hydroxyl group of the serine supplies its oxygen atom to form the C-terminus of the beta chain, while the remainder of the serine residue undergoes an oxidative deamination to produce ammonia and the pyruvoyl group blocking the N-terminus of the alpha chain.

It catalyses the reaction S-adenosyl-L-methionine + H(+) = S-adenosyl 3-(methylsulfanyl)propylamine + CO2. It functions in the pathway amine and polyamine biosynthesis; S-adenosylmethioninamine biosynthesis; S-adenosylmethioninamine from S-adenosyl-L-methionine: step 1/1. Its function is as follows. Essential for biosynthesis of the polyamines spermidine and spermine. Polyamines are essential for cell proliferation and are implicated in cellular processes, ranging from DNA replication to apoptosis. In Caenorhabditis elegans, this protein is S-adenosylmethionine decarboxylase proenzyme.